The sequence spans 166 residues: UPF0304 protein VV1_2093 (166 aa).

Belongs to the UPF0304 family.

This chain is UPF0304 protein VV1_2093, found in Vibrio vulnificus (strain CMCP6).